An 819-amino-acid chain; its full sequence is Leucine--tRNA ligase (819 aa).

Positions 36–46 (PYPSGKIHMGH) match the 'HIGH' region motif. The short motif at 586-590 (KMSKS) is the 'KMSKS' region element. Lysine 589 contributes to the ATP binding site.

The protein belongs to the class-I aminoacyl-tRNA synthetase family.

The protein localises to the cytoplasm. It catalyses the reaction tRNA(Leu) + L-leucine + ATP = L-leucyl-tRNA(Leu) + AMP + diphosphate. The chain is Leucine--tRNA ligase from Wolbachia pipientis subsp. Culex pipiens (strain wPip).